The sequence spans 262 residues: Acyl-[acyl-carrier-protein]--UDP-N-acetylglucosamine O-acyltransferase (262 aa).

The protein belongs to the transferase hexapeptide repeat family. LpxA subfamily. As to quaternary structure, homotrimer.

The protein resides in the cytoplasm. The catalysed reaction is a (3R)-hydroxyacyl-[ACP] + UDP-N-acetyl-alpha-D-glucosamine = a UDP-3-O-[(3R)-3-hydroxyacyl]-N-acetyl-alpha-D-glucosamine + holo-[ACP]. The protein operates within glycolipid biosynthesis; lipid IV(A) biosynthesis; lipid IV(A) from (3R)-3-hydroxytetradecanoyl-[acyl-carrier-protein] and UDP-N-acetyl-alpha-D-glucosamine: step 1/6. Functionally, involved in the biosynthesis of lipid A, a phosphorylated glycolipid that anchors the lipopolysaccharide to the outer membrane of the cell. This chain is Acyl-[acyl-carrier-protein]--UDP-N-acetylglucosamine O-acyltransferase, found in Histophilus somni (strain 129Pt) (Haemophilus somnus).